The following is a 274-amino-acid chain: Malonyl-[acyl-carrier protein] O-methyltransferase (274 aa).

It belongs to the methyltransferase superfamily.

It carries out the reaction malonyl-[ACP] + S-adenosyl-L-methionine = malonyl-[ACP] methyl ester + S-adenosyl-L-homocysteine. It functions in the pathway cofactor biosynthesis; biotin biosynthesis. Functionally, converts the free carboxyl group of a malonyl-thioester to its methyl ester by transfer of a methyl group from S-adenosyl-L-methionine (SAM). It allows to synthesize pimeloyl-ACP via the fatty acid synthetic pathway. This Bacteroides helcogenes (strain ATCC 35417 / DSM 20613 / JCM 6297 / CCUG 15421 / P 36-108) protein is Malonyl-[acyl-carrier protein] O-methyltransferase.